The sequence spans 222 residues: MIF4G domain-containing protein B (222 aa).

One can recognise an MIF4G domain in the interval 3-205 (NSSKEDYKIQ…LEILEFRAGG (203 aa)).

This sequence belongs to the MIF4GD family. As to quaternary structure, interacts with eif4g1, eif4g2 and slbp; probably tethered by SLBP to the 3'-end of mRNAs ending with the histone stem-loop, it also interacts with eif4g1 which is bound to their 5'-end.

It is found in the cytoplasm. It localises to the nucleus. Functionally, functions in replication-dependent translation of histone mRNAs which differ from other eukaryotic mRNAs in that they do not end with a poly-A tail but a stem-loop. May participate in circularizing those mRNAs specifically enhancing their translation. The protein is MIF4G domain-containing protein B (mif4gdb) of Danio rerio (Zebrafish).